Reading from the N-terminus, the 245-residue chain is tRNA1(Val) (adenine(37)-N6)-methyltransferase (245 aa).

Belongs to the methyltransferase superfamily. tRNA (adenine-N(6)-)-methyltransferase family.

The protein localises to the cytoplasm. The enzyme catalyses adenosine(37) in tRNA1(Val) + S-adenosyl-L-methionine = N(6)-methyladenosine(37) in tRNA1(Val) + S-adenosyl-L-homocysteine + H(+). In terms of biological role, specifically methylates the adenine in position 37 of tRNA(1)(Val) (anticodon cmo5UAC). The protein is tRNA1(Val) (adenine(37)-N6)-methyltransferase of Citrobacter koseri (strain ATCC BAA-895 / CDC 4225-83 / SGSC4696).